The following is a 130-amino-acid chain: Fluoride-specific ion channel FluC (130 aa).

4 consecutive transmembrane segments (helical) span residues Leu-3 to Gly-23, Leu-38 to Ala-58, Phe-67 to Leu-87, and Ile-102 to Leu-122. Na(+) contacts are provided by Gly-77 and Thr-80.

It belongs to the fluoride channel Fluc/FEX (TC 1.A.43) family.

It is found in the cell inner membrane. The catalysed reaction is fluoride(in) = fluoride(out). With respect to regulation, na(+) is not transported, but it plays an essential structural role and its presence is essential for fluoride channel function. Fluoride-specific ion channel. Important for reducing fluoride concentration in the cell, thus reducing its toxicity. This is Fluoride-specific ion channel FluC from Helicobacter pylori (strain J99 / ATCC 700824) (Campylobacter pylori J99).